The primary structure comprises 299 residues: Protein tantalus (299 aa).

Residues 16–100 (KDNRSPTTNS…RSSTFGARAG (85 aa)) are disordered. Over residues 20–35 (SPTTNSNLSWQLNQMA) the composition is skewed to polar residues. Residues 53–69 (ESDDNVSSESHDSDDVD) are compositionally biased toward acidic residues. Low complexity predominate over residues 84–93 (CISGSSRRSS). Ser204 and Ser264 each carry phosphoserine.

In terms of assembly, binds to DNA in vitro. Interacts directly with Asx. Ubiquitously expressed in precellularized embryos. Then it decreases at cellular blastoderm to increase again during germ band extension. During germ band extension, it is highly expressed in somatic and visceral mesoderm. Ubiquitously expressed in imaginal disks. In ovary, it is expressed from stage 10.

The protein resides in the nucleus. The protein localises to the cytoplasm. It localises to the chromosome. Functionally, potential cofactor involved in sensory organ development. Despite its interaction with the Polycomb group protein Asx, it does not regulate the expression of homeotic genes. This chain is Protein tantalus, found in Drosophila melanogaster (Fruit fly).